The primary structure comprises 138 residues: Single-stranded DNA-binding protein 4 (138 aa).

In terms of domain architecture, SSB spans Met1 to Glu104. The tract at residues Asp107 to Phe138 is disordered. The Important for interaction with partner proteins motif lies at Asp133–Phe138.

Homotetramer.

Functionally, plays an important role in DNA replication, recombination and repair. Binds to ssDNA and to an array of partner proteins to recruit them to their sites of action during DNA metabolism. The polypeptide is Single-stranded DNA-binding protein 4 (ssb4) (Streptococcus agalactiae serotype V (strain ATCC BAA-611 / 2603 V/R)).